Reading from the N-terminus, the 280-residue chain is Probable endonuclease 4 (280 aa).

9 residues coordinate Zn(2+): H77, H117, E148, D180, H183, H215, D228, H230, and E259.

It belongs to the AP endonuclease 2 family. The cofactor is Zn(2+).

It catalyses the reaction Endonucleolytic cleavage to 5'-phosphooligonucleotide end-products.. Endonuclease IV plays a role in DNA repair. It cleaves phosphodiester bonds at apurinic or apyrimidinic (AP) sites, generating a 3'-hydroxyl group and a 5'-terminal sugar phosphate. The protein is Probable endonuclease 4 of Thermoplasma volcanium (strain ATCC 51530 / DSM 4299 / JCM 9571 / NBRC 15438 / GSS1).